Consider the following 786-residue polypeptide: Digalactosyldiacylglycerol synthase 1, chloroplastic (786 aa).

Residues 1 to 25 (MASQRQPPSSSNAFSFLSKGWREVR) constitute a chloroplast transit peptide.

It belongs to the glycosyltransferase group 1 family. Glycosyltransferase 4 subfamily. As to expression, high expression in nodules infected cells, but low in nodule inner cortex and root central cylinder.

It localises to the plastid. The protein localises to the chloroplast outer membrane. It is found in the plastid outer membrane. It carries out the reaction a 1,2-diacyl-3-O-(beta-D-galactosyl)-sn-glycerol + UDP-alpha-D-galactose = a 1,2-diacyl-3-O-[alpha-D-galactosyl-(1-&gt;6)-beta-D-galactosyl]-sn-glycerol + UDP + H(+). Functionally, involved in the synthesis of diacylglycerol galactolipids that are specifically found in thylakoid and in nodule peribacteroid membranes. Specific for alpha-glycosidic linkages. The sequence is that of Digalactosyldiacylglycerol synthase 1, chloroplastic from Lotus japonicus (Lotus corniculatus var. japonicus).